A 299-amino-acid polypeptide reads, in one-letter code: MSVTSSPHRSGSVAVIGRPNVGKSTLTNALVGAKVSIVSNRPQTTRHRLLGIATFPEGQLVLVDTPGLHREQKRAMNRVMNRAARGSLEGVDAAVLVIEAGRWDEEDTLAFRVLSDAEVPVVLVVNKVDRLKDKTALLPFLAQVSEGRTFAAVHPVSALKRKGLEALVGDLLKLVPEAEAMFGEDEITDRSQRFLAGELVREQLMRQLGEELPYATTVEIERFAEDGALLRIGAVIWVEREGQKAIVIGKGGTRLKEIGGKARLQMERLFGAKVFLETWVRVREGWSDDEAALKAFGYE.

An Era-type G domain is found at 9–177 (RSGSVAVIGR…VGDLLKLVPE (169 aa)). Residues 17–24 (GRPNVGKS) are G1. Residue 17–24 (GRPNVGKS) participates in GTP binding. The G2 stretch occupies residues 43 to 47 (QTTRH). Positions 64–67 (DTPG) are G3. GTP-binding positions include 64-68 (DTPGL) and 126-129 (NKVD). The interval 126-129 (NKVD) is G4. The tract at residues 156-158 (VSA) is G5. The region spanning 200–284 (VREQLMRQLG…FLETWVRVRE (85 aa)) is the KH type-2 domain.

Belongs to the TRAFAC class TrmE-Era-EngA-EngB-Septin-like GTPase superfamily. Era GTPase family. Monomer.

The protein resides in the cytoplasm. Its subcellular location is the cell inner membrane. In terms of biological role, an essential GTPase that binds both GDP and GTP, with rapid nucleotide exchange. Plays a role in 16S rRNA processing and 30S ribosomal subunit biogenesis and possibly also in cell cycle regulation and energy metabolism. The polypeptide is GTPase Era (Xanthomonas oryzae pv. oryzae (strain MAFF 311018)).